Reading from the N-terminus, the 62-residue chain is Cecropin-A (62 aa).

The N-terminal stretch at 1–20 (MNLVKILFCVFACLVFTVTA) is a signal peptide. Positions 21–24 (VPEP) are cleaved as a propeptide — removed by a dipeptidylpeptidase. Position 60 is a threonine amide (Thr-60).

The protein belongs to the cecropin family.

It is found in the secreted. Has antibacterial activity. In Trichoplusia ni (Cabbage looper), this protein is Cecropin-A.